We begin with the raw amino-acid sequence, 364 residues long: Appendage-associated protein (364 aa).

Coiled-coil stretches lie at residues 142 to 196 (IIHE…AECR) and 288 to 313 (RIAQ…ALGK).

Its subcellular location is the secreted. Functionally, associates with actin filament appendages that are formed in the inclusion appendages of the parasitophorous vacuole during infection of the host erythrocyte. The polypeptide is Appendage-associated protein (Anaplasma marginale (strain Illinois)).